The following is a 361-amino-acid chain: MNQDKHPEITDEEQELITVEELSQKLELLYKDMEQIRRENLLFEAYLARNRKEIAKEDEVSEDKKGKGKKKDKNVDKKSLLLTNEEKFEIAQQEQDALKKQIDDGRIKSDQILETLRAILEETDMAITEIRKDAFDFQREILVGGENSRTGKIEAEKIIKFFEEKERQKDALIAKYSSKRTNLERQILKTNNQIQKKEEMGDDLKFIDFYQLQIENKKYVKEIDDKNKKLLALKISTNRISQTLKDEKQNLKQELDKGKEYASQMSERKKKISKIDAQIKSVKKVTSKLEKDRKIYDKQKEIFVQDNQDDVPQIMKYVQYKSKEQQLLYAIQNLERKIEIAELAYKKANRILQSSQQFQQK.

The protein belongs to the CFAP263 family. As to quaternary structure, forms a complex with CFAP184; the interaction is required for functional activity in cilia.

It localises to the cell projection. The protein localises to the cilium. In terms of biological role, in complex with CFAP263, acts as a regulator of ciliary beating that connects radial spoke 3 (RS3) to the inner dynein arm (IDA) and the nexin-dynein regulatory complex (N-DRC). The complex is positioned parallel to N-DRC and forms a connection between the arch at the base of RS3, the IDA tail and N-DRC. The protein is Cilia- and flagella-associated protein 263 (CFAP263) of Tetrahymena thermophila (strain SB210).